Consider the following 407-residue polypeptide: Acetate kinase (407 aa).

Asn-10 contributes to the Mg(2+) binding site. Position 17 (Lys-17) interacts with ATP. Arg-93 contacts substrate. Asp-150 acts as the Proton donor/acceptor in catalysis. Residues 210–214, 284–286, and 332–336 each bind ATP; these read HLGNG, DMR, and GVGEN. Residue Glu-386 coordinates Mg(2+).

The protein belongs to the acetokinase family. As to quaternary structure, homodimer. It depends on Mg(2+) as a cofactor. Mn(2+) is required as a cofactor.

Its subcellular location is the cytoplasm. The enzyme catalyses acetate + ATP = acetyl phosphate + ADP. The protein operates within metabolic intermediate biosynthesis; acetyl-CoA biosynthesis; acetyl-CoA from acetate: step 1/2. Its function is as follows. Catalyzes the formation of acetyl phosphate from acetate and ATP. Can also catalyze the reverse reaction. In Streptomyces coelicolor (strain ATCC BAA-471 / A3(2) / M145), this protein is Acetate kinase.